The following is a 481-amino-acid chain: Arylsulfatase (481 aa).

The Ca(2+) site is built by Asp-11, Gln-12, and Cys-51. Cys-51 acts as the Nucleophile in catalysis. Cys-51 carries the post-translational modification 3-oxoalanine (Cys). The active site involves His-102. Ca(2+)-binding residues include Asp-302 and His-303.

It belongs to the sulfatase family. Ca(2+) is required as a cofactor. Post-translationally, the conversion to 3-oxoalanine (also known as C-formylglycine, FGly), of a serine or cysteine residue in prokaryotes and of a cysteine residue in eukaryotes, is critical for catalytic activity.

It catalyses the reaction an aryl sulfate + H2O = a phenol + sulfate + H(+). Functionally, has sulfatase activity toward para-nitrophenyl sulfate, which is increased in presence of calcium ion. The protein is Arylsulfatase of Clostridium perfringens (strain 13 / Type A).